A 175-amino-acid chain; its full sequence is Replication restart protein PriC (175 aa).

Belongs to the PriC family. Monomer. Oligomerizes in the absence of DNA. Component of the replication restart primosome, which is composed of PriA, PriB, PriC, DnaB and DnaT; DnaG primase associates transiently with this complex. Interacts with the C-terminus of SSB; this interaction is required for DnaB loading onto substrate replication forks. Interacts with DnaB alone and in the DnaB-DnaC complex, probably 1:1 binding with DnaB.

In terms of biological role, involved in the restart of stalled replication forks, which reloads the replicative helicase (DnaB) on sites other than the origin of replication. Recognizes abandoned replication forks and remodels DNA single-stranded binding protein (SSB) on ssDNA to uncover a loading site for DnaB. There are several restart pathways, the PriA-PriC pathway is a minor restart pathway. Also part of the minor PriC-Rep pathway for restart of stalled replication forks, which has a different substrate specificity than PriA. priB and priC have redundant roles in the cell. Stimulates the 3'-5' helicase activity of Rep helicase in vitro. In vitro can load the DnaB replicative helicase from a DnaB-DnaC complex on an SSB-coated stalled replication fork with no leading- or lagging-strand (or with a gap between the leading strand and fork junction) in the absence of other primosome proteins (PriA, PriB or DnaT). Also part of the major restart pathway with PriA, PriB, DnaB, DnaT and DnaG primase. PriC may contribute to the stability of the preprimosome complex. Preferentially binds approximately 7-9 nucleotides of single-stranded (ss)DNA, also binds double-stranded (ds)DNA. PriB is probably more important in the cell than PriC. This Escherichia coli (strain K12) protein is Replication restart protein PriC.